The chain runs to 336 residues: Eukaryotic translation initiation factor 3 subunit H (336 aa).

The 134-residue stretch at 21–154 (VQCDGLAAMK…LKAYRLTPQA (134 aa)) folds into the MPN domain.

The protein belongs to the eIF-3 subunit H family. As to quaternary structure, component of the eukaryotic translation initiation factor 3 (eIF-3) complex.

It localises to the cytoplasm. Its function is as follows. Component of the eukaryotic translation initiation factor 3 (eIF-3) complex, which is involved in protein synthesis of a specialized repertoire of mRNAs and, together with other initiation factors, stimulates binding of mRNA and methionyl-tRNAi to the 40S ribosome. The eIF-3 complex specifically targets and initiates translation of a subset of mRNAs involved in cell proliferation. The chain is Eukaryotic translation initiation factor 3 subunit H from Culex quinquefasciatus (Southern house mosquito).